A 93-amino-acid chain; its full sequence is Conotoxin F_Vc1 (93 aa).

The N-terminal stretch at 1-22 is a signal peptide; sequence MQRGAVLLGVVAFLALWPQAGA. The propeptide occupies 23–33; that stretch reads EPYNLNDPDVR.

This sequence belongs to the conotoxin F superfamily. Contains 4 disulfide bonds. In terms of tissue distribution, expressed by the venom duct.

The protein localises to the secreted. This chain is Conotoxin F_Vc1, found in Conus victoriae (Queen Victoria cone).